A 608-amino-acid polypeptide reads, in one-letter code: Glutamine--fructose-6-phosphate aminotransferase [isomerizing] (608 aa).

The active-site Nucleophile; for GATase activity is Cys2. Residues 2 to 217 (CGIVGIVGHK…DGDWAVVGKT (216 aa)) enclose the Glutamine amidotransferase type-2 domain. 2 SIS domains span residues 283-422 (TDID…ARGT) and 456-598 (LSRE…VDQP). Lys603 (for Fru-6P isomerization activity) is an active-site residue.

The protein resides in the cytoplasm. It catalyses the reaction D-fructose 6-phosphate + L-glutamine = D-glucosamine 6-phosphate + L-glutamate. Involved in the production of the root hair deformation (HAD) factor specifically on medicago. The sequence is that of Glutamine--fructose-6-phosphate aminotransferase [isomerizing] (nodM) from Rhizobium leguminosarum bv. viciae.